The sequence spans 302 residues: Protoheme IX farnesyltransferase (302 aa).

9 helical membrane-spanning segments follow: residues 26 to 46 (VVVLMVFTAIVGMFLASPGQV), 48 to 68 (WVALTVGSLGIALAAGSAAAL), 98 to 118 (VLGFSSLLGVAGLGMLALWIN), 120 to 140 (LTAALTFASLIGYALVYTLYL), 148 to 168 (IVIGGAAGAAPPLLGWTAVTG), 174 to 194 (ALLLFLIVFVWTPPHFWALAV), 221 to 241 (ILLYTVLLLAVSLLPWATFMG), 244 to 264 (LYLAAAVGLGGWYLMLNVRLL), and 280 to 300 (IIYLFGLFAALLVDRQLPVWL).

It belongs to the UbiA prenyltransferase family. Protoheme IX farnesyltransferase subfamily.

It is found in the cell inner membrane. It carries out the reaction heme b + (2E,6E)-farnesyl diphosphate + H2O = Fe(II)-heme o + diphosphate. Its pathway is porphyrin-containing compound metabolism; heme O biosynthesis; heme O from protoheme: step 1/1. Converts heme B (protoheme IX) to heme O by substitution of the vinyl group on carbon 2 of heme B porphyrin ring with a hydroxyethyl farnesyl side group. This Alkalilimnicola ehrlichii (strain ATCC BAA-1101 / DSM 17681 / MLHE-1) protein is Protoheme IX farnesyltransferase.